The chain runs to 283 residues: Probable endonuclease 4 (283 aa).

The Zn(2+) site is built by histidine 67, histidine 107, glutamate 144, aspartate 178, histidine 181, histidine 215, aspartate 228, histidine 230, and glutamate 260.

It belongs to the AP endonuclease 2 family. It depends on Zn(2+) as a cofactor.

It catalyses the reaction Endonucleolytic cleavage to 5'-phosphooligonucleotide end-products.. Functionally, endonuclease IV plays a role in DNA repair. It cleaves phosphodiester bonds at apurinic or apyrimidinic (AP) sites, generating a 3'-hydroxyl group and a 5'-terminal sugar phosphate. The chain is Probable endonuclease 4 from Citrifermentans bemidjiense (strain ATCC BAA-1014 / DSM 16622 / JCM 12645 / Bem) (Geobacter bemidjiensis).